We begin with the raw amino-acid sequence, 718 residues long: Cyclomaltodextrin glucanotransferase (718 aa).

An N-terminal signal peptide occupies residues 1–34 (MFQMAKRAFLSTTLTLGLLAGSALPFLPASAAYA). The interval 35–172 (DPDIAVTNKQ…GIKIIIDFAP (138 aa)) is A1. 4 residues coordinate Ca(2+): aspartate 61, asparagine 63, asparagine 66, and asparagine 67. Cysteine 77 and cysteine 84 are joined by a disulfide. The Ca(2+) site is built by glycine 85 and aspartate 87. 134 to 135 (YW) contacts substrate. Asparagine 173 contributes to the Ca(2+) binding site. Positions 173-236 (NHTSPAMETD…NLYDLADFNH (64 aa)) are b. Histidine 174 is a substrate binding site. Isoleucine 224 lines the Ca(2+) pocket. Substrate is bound at residue 227–230 (NLYD). Aspartate 233 is a binding site for Ca(2+). The segment at 237–440 (NNATIDKYFK…LRKSNPAIAY (204 aa)) is A2. Arginine 261 provides a ligand contact to substrate. Catalysis depends on aspartate 263, which acts as the Nucleophile. 266–267 (KH) serves as a coordination point for substrate. Ca(2+) is bound at residue histidine 267. Glutamate 291 acts as the Proton donor in catalysis. Substrate-binding residues include histidine 361, aspartate 405, and arginine 409. The interval 441-528 (GSTQQRWINN…ATAVWQYTAA (88 aa)) is c. A d region spans residues 529–614 (ETTPTIGHVG…SNAYNHFTIL (86 aa)). The IPT/TIG domain occupies 532-612 (PTIGHVGPVM…VNSNAYNHFT (81 aa)). The CBM20 domain maps to 613-718 (ILTGDQVTVR…GTATVTVNWQ (106 aa)). The segment at 615-718 (TGDQVTVRFV…GTATVTVNWQ (104 aa)) is e.

The protein belongs to the glycosyl hydrolase 13 family. Monomer. Ca(2+) is required as a cofactor.

It is found in the secreted. It catalyses the reaction Cyclizes part of a (1-&gt;4)-alpha-D-glucan chain by formation of a (1-&gt;4)-alpha-D-glucosidic bond.. This chain is Cyclomaltodextrin glucanotransferase (cgt), found in Bacillus sp. (strain 6.6.3).